A 359-amino-acid polypeptide reads, in one-letter code: Non-classical arabinogalactan protein 31 (359 aa).

An N-terminal signal peptide occupies residues Met-1 to Thr-24. The tract at residues Thr-31–Pro-215 is disordered. The segment covering His-44–Pro-66 has biased composition (basic residues). Residues Pro-67–Pro-215 show a composition bias toward pro residues. 4-hydroxyproline occurs at positions 71, 75, 79, 82, 83, 87, 91, 95, 99, 103, 107, 111, 114, 115, 119, 123, 127, 131, 135, 139, 143, 147, 151, 155, 159, 163, 167, 171, 175, 179, 183, 186, 187, 191, 195, 199, 203, 207, 210, 211, 215, and 219. O-linked (Ara...) hydroxyproline glycosylation is found at Pro-71, Pro-75, Pro-79, Pro-82, Pro-83, Pro-87, Pro-91, Pro-95, Pro-99, Pro-103, Pro-107, Pro-111, Pro-114, Pro-115, Pro-119, Pro-123, Pro-127, Pro-131, Pro-135, Pro-139, Pro-143, Pro-147, Pro-151, Pro-155, Pro-159, Pro-163, Pro-167, Pro-171, Pro-175, Pro-179, Pro-183, Pro-186, Pro-187, Pro-191, Pro-195, Pro-199, Pro-203, Pro-207, Pro-210, Pro-211, Pro-215, and Pro-219. Copy 1 of the repeat occupies Pro-90–Lys-109. A run of 3 repeats spans residues Pro-122–Lys-141, Pro-142–Lys-161, and Pro-162–Lys-181. 2 N-linked (GlcNAc...) asparagine glycosylation sites follow: Asn-226 and Asn-269.

The protein belongs to the non-classical AGP family. Post-translationally, hydroxylated on numerous prolines in the proline-rich region. O-glycosylated on numerous hydroxyprolines in the proline-rich region; noncontiguous hydroxylproline residues are glycosylated with arabinogalactan. Expressed in vascular bundles of roots, leaves, sepals and stamen filaments, and pistils but not stigma.

The protein localises to the secreted. Its subcellular location is the cell wall. Functionally, proteoglycan that may contribute to the strengthening of cell walls. The sequence is that of Non-classical arabinogalactan protein 31 from Arabidopsis thaliana (Mouse-ear cress).